Here is an 805-residue protein sequence, read N- to C-terminus: G-type lectin S-receptor-like serine/threonine-protein kinase SD1-29 (805 aa).

Residues 1–21 (MGMVLFACLLLLIIFPTCGYA) form the signal peptide. In terms of domain architecture, Bulb-type lectin spans 22–141 (AINTSSPLSI…VSGNKLWQSF (120 aa)). Residues 22–428 (AINTSSPLSI…SELAGSSRRK (407 aa)) are Extracellular-facing. N-linked (GlcNAc...) asparagine glycans are attached at residues asparagine 24, asparagine 50, asparagine 85, asparagine 91, and asparagine 248. An EGF-like domain is found at 277–313 (PENPCDLYGRCGPYGLCVRSDPPKCECLKGFVPKSDE). Disulfide bonds link cysteine 281-cysteine 293 and cysteine 287-cysteine 301. N-linked (GlcNAc...) asparagine glycans are attached at residues asparagine 319 and asparagine 378. The PAN domain occupies 332–418 (CQAKSSMKTQ…GEFLFIRLAS (87 aa)). 2 disulfides stabilise this stretch: cysteine 371–cysteine 392 and cysteine 375–cysteine 381. Residues 429-449 (IIVGTTVSLSIFLILVFAAIM) form a helical membrane-spanning segment. The Cytoplasmic segment spans residues 450–805 (LWRYRAKQND…EMTESMIQGR (356 aa)). In terms of domain architecture, Protein kinase spans 488–773 (FSPSNKLGQG…DLPVPKQPIF (286 aa)). ATP contacts are provided by residues 494–502 (LGQGGFGPV) and lysine 516. Residues serine 522 and serine 537 each carry the phosphoserine modification. The tract at residues 577–594 (CLKFELDWPKRFNIIQGI) is caM-binding. At tyrosine 600 the chain carries Phosphotyrosine. The active-site Proton acceptor is aspartate 613. Phosphoserine is present on residues serine 617 and serine 630. Phosphothreonine is present on threonine 647. Residues serine 690 and serine 793 each carry the phosphoserine modification.

Belongs to the protein kinase superfamily. Ser/Thr protein kinase family. As to quaternary structure, interacts with PUB9, PUB13, PUB14, PUB29, PUB38, PUB44 and PUB45. Interacts with PBL34, PBL35 and PBL36. Post-translationally, autophosphorylated at Tyr-600. Autophosphorylation at Tyr-600 is required for downstream phosphorylation of the receptor-like cytoplasmic kinase PBL34, PBL35 and PBL36, and activation of plant immunity.

It is found in the cell membrane. It carries out the reaction L-seryl-[protein] + ATP = O-phospho-L-seryl-[protein] + ADP + H(+). The enzyme catalyses L-threonyl-[protein] + ATP = O-phospho-L-threonyl-[protein] + ADP + H(+). It catalyses the reaction L-tyrosyl-[protein] + ATP = O-phospho-L-tyrosyl-[protein] + ADP + H(+). Functionally, S-domain receptor protein kinase involved in lipopolysaccharide (LPS) sensing. Specifically detects LPS of Pseudomonas and Xanthomonas species. LPS are major components of the outer membrane of Gram-negative bacteria and are important microbe-associated molecular patterns (MAMPs) that trigger biphasic production of reactive oxygen species (ROS) and immune responses in plants. Seems to be only partially associated with the second LPS-triggered ROS burst. Mediates defense signaling in response to the medium-chain 3-hydroxy fatty acid 3-OH-C10:0, a pathogen-associated molecular pattern (PAMP) which induces autophosphorylation at Tyr-600. Autophosphorylation at Tyr-600 is required for downstream phosphorylation of the receptor-like cytoplasmic kinase PBL34, PBL35 and PBL36, and activation of plant immunity. (Microbial infection) Targeted by the bacterial type III effector protein tyrosine phosphatase HopAO1 from Pseudomonas syringae. HopAO1 dephosphorylates Tyr-600, which suppresses the immune response. The protein is G-type lectin S-receptor-like serine/threonine-protein kinase SD1-29 of Arabidopsis thaliana (Mouse-ear cress).